The sequence spans 194 residues: Adenylate kinase (194 aa).

11-16 serves as a coordination point for ATP; that stretch reads GSGKGT. The interval 31-60 is NMP; it reads STGELLRAEIKAQTELGQAAAGYINEGHLV. AMP-binding positions include T32, R37, 58-60, 86-89, and Q93; these read HLV and GFPR. The tract at residues 127–137 is LID; that stretch reads NRGKVSGRSDD. An ATP-binding site is contributed by R128. AMP is bound by residues R134 and R145. G173 provides a ligand contact to ATP.

The protein belongs to the adenylate kinase family. As to quaternary structure, monomer.

The protein localises to the cytoplasm. It catalyses the reaction AMP + ATP = 2 ADP. It participates in purine metabolism; AMP biosynthesis via salvage pathway; AMP from ADP: step 1/1. Functionally, catalyzes the reversible transfer of the terminal phosphate group between ATP and AMP. Plays an important role in cellular energy homeostasis and in adenine nucleotide metabolism. In Porphyromonas gingivalis (strain ATCC BAA-308 / W83), this protein is Adenylate kinase.